Consider the following 467-residue polypeptide: UDP-N-acetylmuramate--L-alanine ligase (467 aa).

114–120 (GTHGKTT) lines the ATP pocket.

It belongs to the MurCDEF family.

It is found in the cytoplasm. It catalyses the reaction UDP-N-acetyl-alpha-D-muramate + L-alanine + ATP = UDP-N-acetyl-alpha-D-muramoyl-L-alanine + ADP + phosphate + H(+). It functions in the pathway cell wall biogenesis; peptidoglycan biosynthesis. In terms of biological role, cell wall formation. This chain is UDP-N-acetylmuramate--L-alanine ligase, found in Azorhizobium caulinodans (strain ATCC 43989 / DSM 5975 / JCM 20966 / LMG 6465 / NBRC 14845 / NCIMB 13405 / ORS 571).